Reading from the N-terminus, the 359-residue chain is Ribosomal RNA large subunit methyltransferase M (359 aa).

S-adenosyl-L-methionine is bound by residues serine 186, 219 to 222 (CPGG), aspartate 238, aspartate 258, and aspartate 275. The active-site Proton acceptor is the lysine 304.

It belongs to the class I-like SAM-binding methyltransferase superfamily. RNA methyltransferase RlmE family. RlmM subfamily. In terms of assembly, monomer.

It is found in the cytoplasm. The enzyme catalyses cytidine(2498) in 23S rRNA + S-adenosyl-L-methionine = 2'-O-methylcytidine(2498) in 23S rRNA + S-adenosyl-L-homocysteine + H(+). Functionally, catalyzes the 2'-O-methylation at nucleotide C2498 in 23S rRNA. The protein is Ribosomal RNA large subunit methyltransferase M of Vibrio vulnificus (strain YJ016).